The chain runs to 169 residues: Peptide methionine sulfoxide reductase MsrA (169 aa).

Cysteine 10 is an active-site residue.

It belongs to the MsrA Met sulfoxide reductase family.

It carries out the reaction L-methionyl-[protein] + [thioredoxin]-disulfide + H2O = L-methionyl-(S)-S-oxide-[protein] + [thioredoxin]-dithiol. The catalysed reaction is [thioredoxin]-disulfide + L-methionine + H2O = L-methionine (S)-S-oxide + [thioredoxin]-dithiol. Functionally, has an important function as a repair enzyme for proteins that have been inactivated by oxidation. Catalyzes the reversible oxidation-reduction of methionine sulfoxide in proteins to methionine. The chain is Peptide methionine sulfoxide reductase MsrA from Streptococcus uberis (strain ATCC BAA-854 / 0140J).